We begin with the raw amino-acid sequence, 682 residues long: Beta-galactosidase (682 aa).

Residues 1 to 23 form the signal peptide; sequence MPGFLVRILPLLLPLLLLGPTRG. Positions 24-28 are excised as a propeptide; that stretch reads LRNAT. N-linked (GlcNAc...) asparagine glycosylation occurs at N26. Residues Y83, E129, and N187 each coordinate substrate. The active-site Proton donor is E188. A disulfide bridge links C195 with C230. N247 carries an N-linked (GlcNAc...) asparagine glycan. E268 serves as the catalytic Nucleophile. Residue Y333 participates in substrate binding. 4 N-linked (GlcNAc...) asparagine glycosylation sites follow: N464, N498, N545, and N555. C626 and C634 are disulfide-bonded.

It belongs to the glycosyl hydrolase 35 family. In terms of assembly, homodimer. May form higher multimers.

The protein localises to the lysosome. It catalyses the reaction Hydrolysis of terminal non-reducing beta-D-galactose residues in beta-D-galactosides.. In terms of biological role, cleaves beta-linked terminal galactosyl residues from gangliosides, glycoproteins, and glycosaminoglycans. The protein is Beta-galactosidase (GLB1) of Macaca fascicularis (Crab-eating macaque).